The following is a 336-amino-acid chain: Ketol-acid reductoisomerase (NADP(+)) (336 aa).

A KARI N-terminal Rossmann domain is found at 1–182 (MAVIYYDKDA…GVTRAGVIET (182 aa)). NADP(+) is bound by residues 25 to 28 (YGSQ), R48, S51, S53, and 83 to 86 (DEHQ). H108 is an active-site residue. G134 contributes to the NADP(+) binding site. The 146-residue stretch at 183–328 (TFKEETETDL…KELRKMMPWL (146 aa)) folds into the KARI C-terminal knotted domain. 4 residues coordinate Mg(2+): D191, E195, E227, and E231. A substrate-binding site is contributed by S252.

It belongs to the ketol-acid reductoisomerase family. The cofactor is Mg(2+).

The enzyme catalyses (2R)-2,3-dihydroxy-3-methylbutanoate + NADP(+) = (2S)-2-acetolactate + NADPH + H(+). The catalysed reaction is (2R,3R)-2,3-dihydroxy-3-methylpentanoate + NADP(+) = (S)-2-ethyl-2-hydroxy-3-oxobutanoate + NADPH + H(+). It functions in the pathway amino-acid biosynthesis; L-isoleucine biosynthesis; L-isoleucine from 2-oxobutanoate: step 2/4. Its pathway is amino-acid biosynthesis; L-valine biosynthesis; L-valine from pyruvate: step 2/4. Its function is as follows. Involved in the biosynthesis of branched-chain amino acids (BCAA). Catalyzes an alkyl-migration followed by a ketol-acid reduction of (S)-2-acetolactate (S2AL) to yield (R)-2,3-dihydroxy-isovalerate. In the isomerase reaction, S2AL is rearranged via a Mg-dependent methyl migration to produce 3-hydroxy-3-methyl-2-ketobutyrate (HMKB). In the reductase reaction, this 2-ketoacid undergoes a metal-dependent reduction by NADPH to yield (R)-2,3-dihydroxy-isovalerate. This is Ketol-acid reductoisomerase (NADP(+)) from Thermotoga maritima (strain ATCC 43589 / DSM 3109 / JCM 10099 / NBRC 100826 / MSB8).